Consider the following 483-residue polypeptide: Aspartyl/glutamyl-tRNA(Asn/Gln) amidotransferase subunit B (483 aa).

This sequence belongs to the GatB/GatE family. GatB subfamily. As to quaternary structure, heterotrimer of A, B and C subunits.

It catalyses the reaction L-glutamyl-tRNA(Gln) + L-glutamine + ATP + H2O = L-glutaminyl-tRNA(Gln) + L-glutamate + ADP + phosphate + H(+). The enzyme catalyses L-aspartyl-tRNA(Asn) + L-glutamine + ATP + H2O = L-asparaginyl-tRNA(Asn) + L-glutamate + ADP + phosphate + 2 H(+). Functionally, allows the formation of correctly charged Asn-tRNA(Asn) or Gln-tRNA(Gln) through the transamidation of misacylated Asp-tRNA(Asn) or Glu-tRNA(Gln) in organisms which lack either or both of asparaginyl-tRNA or glutaminyl-tRNA synthetases. The reaction takes place in the presence of glutamine and ATP through an activated phospho-Asp-tRNA(Asn) or phospho-Glu-tRNA(Gln). The protein is Aspartyl/glutamyl-tRNA(Asn/Gln) amidotransferase subunit B of Rickettsia conorii (strain ATCC VR-613 / Malish 7).